The primary structure comprises 827 residues: Transcription factor SOX-6 (827 aa).

A compositionally biased stretch (polar residues) spans 1 to 10; that stretch reads MSSKQATSPF. A disordered region spans residues 1-51; sequence MSSKQATSPFACTVDGEETMTQDLTSREKEEGSDQHPASHLPLHPIMHNKP. Positions 25–34 are enriched in basic and acidic residues; it reads TSREKEEGSD. The residue at position 119 (threonine 119) is a Phosphothreonine. A coiled-coil region spans residues 184–257; the sequence is LAEKERQLST…QHKINLLQQQ (74 aa). Disordered regions lie at residues 329–360 and 380–470; these read HVSHPQINPRLKGISDRLGRNLDPYEHGGGHS and SPGA…PIGG. Residues 341–357 show a composition bias toward basic and acidic residues; it reads GISDRLGRNLDPYEHGG. Serine 399 carries the post-translational modification Phosphoserine. Threonine 401 bears the Phosphothreonine mark. Residues lysine 404 and lysine 417 each participate in a glycyl lysine isopeptide (Lys-Gly) (interchain with G-Cter in SUMO) cross-link. Polar residues-rich tracts occupy residues 421–431 and 439–461; these read TAQPLNLSSRP and SPTSPTQSLFPASKTSPVNLPNK. A phosphoserine mark is found at serine 439 and serine 442. The segment at residues 620-688 is a DNA-binding region (HMG box); it reads IKRPMNAFMV…IHLEKYPNYK (69 aa). Disordered regions lie at residues 752 to 772 and 786 to 827; these read TPSPQMTSDCSSTSASPEPSL and ASLA…VSAN. The segment covering 795-808 has biased composition (acidic residues); the sequence is NGEDEMEAYDDYED.

Homodimer. Interacts with DAZAP2. May interact with CENPK. Sumoylation inhibits the transcriptional activity.

The protein localises to the nucleus. It localises to the cytoplasm. Its function is as follows. Transcription factor that plays a key role in several developmental processes, including neurogenesis, chondrocytes differentiation and cartilage formation. Specifically binds the 5'-AACAAT-3' DNA motif present in enhancers and super-enhancers and promotes expression of genes important for chondrogenesis. Required for overt chondrogenesis when condensed prechondrocytes differentiate into early stage chondrocytes: SOX5 and SOX6 cooperatively bind with SOX9 on active enhancers and super-enhancers associated with cartilage-specific genes, and thereby potentiate SOX9's ability to transactivate. Not involved in precartilaginous condensation, the first step in chondrogenesis, during which skeletal progenitors differentiate into prechondrocytes. Together with SOX5, required to form and maintain a pool of highly proliferating chondroblasts between epiphyses and metaphyses, to form columnar chondroblasts, delay chondrocyte prehypertrophy but promote hypertrophy, and to delay terminal differentiation of chondrocytes on contact with ossification fronts. Binds to the proximal promoter region of the myelin protein MPZ gene, and is thereby involved in the differentiation of oligodendroglia in the developing spinal tube. Binds to the gene promoter of MBP and acts as a transcriptional repressor. This is Transcription factor SOX-6 from Rattus norvegicus (Rat).